A 36-amino-acid chain; its full sequence is MTNLNLPSLFVPLVGLVFPAIAMASLFLHVQKNKIV.

A helical transmembrane segment spans residues 8-28 (SLFVPLVGLVFPAIAMASLFL).

The protein belongs to the PsaI family.

It is found in the plastid. Its subcellular location is the chloroplast thylakoid membrane. In terms of biological role, may help in the organization of the PsaL subunit. This is Photosystem I reaction center subunit VIII from Brassica oleracea (Wild cabbage).